A 282-amino-acid chain; its full sequence is Pantothenate synthetase (282 aa).

30 to 37 serves as a coordination point for ATP; that stretch reads MGYLHEGH. His-37 serves as the catalytic Proton donor. Residue Gln-61 coordinates (R)-pantoate. Gln-61 serves as a coordination point for beta-alanine. Residue 148-151 participates in ATP binding; sequence GQKD. Gln-154 provides a ligand contact to (R)-pantoate. ATP-binding positions include Val-177 and 185–188; that span reads MSSR.

It belongs to the pantothenate synthetase family. Homodimer.

Its subcellular location is the cytoplasm. The enzyme catalyses (R)-pantoate + beta-alanine + ATP = (R)-pantothenate + AMP + diphosphate + H(+). Its pathway is cofactor biosynthesis; (R)-pantothenate biosynthesis; (R)-pantothenate from (R)-pantoate and beta-alanine: step 1/1. In terms of biological role, catalyzes the condensation of pantoate with beta-alanine in an ATP-dependent reaction via a pantoyl-adenylate intermediate. This is Pantothenate synthetase from Syntrophomonas wolfei subsp. wolfei (strain DSM 2245B / Goettingen).